The sequence spans 342 residues: tRNA N6-adenosine threonylcarbamoyltransferase (342 aa).

Residues His-111 and His-115 each coordinate Fe cation. Substrate-binding positions include 134–138 (LVSGG), Asp-167, Gly-180, Asp-184, and Asn-273. Residue Asp-298 participates in Fe cation binding.

Belongs to the KAE1 / TsaD family. The cofactor is Fe(2+).

It localises to the cytoplasm. The catalysed reaction is L-threonylcarbamoyladenylate + adenosine(37) in tRNA = N(6)-L-threonylcarbamoyladenosine(37) in tRNA + AMP + H(+). In terms of biological role, required for the formation of a threonylcarbamoyl group on adenosine at position 37 (t(6)A37) in tRNAs that read codons beginning with adenine. Is involved in the transfer of the threonylcarbamoyl moiety of threonylcarbamoyl-AMP (TC-AMP) to the N6 group of A37, together with TsaE and TsaB. TsaD likely plays a direct catalytic role in this reaction. This Gloeobacter violaceus (strain ATCC 29082 / PCC 7421) protein is tRNA N6-adenosine threonylcarbamoyltransferase.